The sequence spans 244 residues: MFLTRSEYDRGVNTFSPEGRLFQVEYAIEAIKLGSTAIGICTPEGVVLAVEKRITSPLMVPSTVEKIVEVDKHIGCATSGLMADARTLIERARVECQNHWFVYNERMSIESCAQAVSTLAIQFGDSGDSDGAAAMSRPFGVAILFAGIEAGQPQLWHMDPSGTFVRHGAKAIGSGSEGAQQNLQDLFRPDLTLDEAIDISLNTLKQVMEEKLNSTNVEVMTMTKEREFYMFTKEEVEQHIKNIA.

Belongs to the peptidase T1A family. As to quaternary structure, the 26S proteasome consists of a 20S proteasome core and two 19S regulatory subunits. The 20S proteasome core is composed of 28 subunits that are arranged in four stacked rings, resulting in a barrel-shaped structure. The two end rings are each formed by seven alpha subunits, and the two central rings are each formed by seven beta subunits. The catalytic chamber with the active sites is on the inside of the barrel.

It is found in the cytoplasm. Its subcellular location is the nucleus. In terms of biological role, the proteasome is a multicatalytic proteinase complex which is characterized by its ability to cleave peptides with Arg, Phe, Tyr, Leu, and Glu adjacent to the leaving group at neutral or slightly basic pH. The proteasome has an ATP-dependent proteolytic activity. The polypeptide is Proteasome subunit alpha type-5 (Prosalpha5) (Drosophila melanogaster (Fruit fly)).